The chain runs to 673 residues: MNDQGIKESIETLKEQIRKYDYHYYVLDEPLVPDAEYDRCFKALQQYEEQYPQFLSPDSPTQRVSGTPSDAFMPVAHKQPMLSLSNVFTIDELKAFIKRAIEKLDEPNQQLVFACEPKLDGLAVNMTYEGGILTHAATRGDGAVGENITANIKTIASVPLRLRVSNPPKLIEVRGEVYIPKADFEAYNARARELGEKTFANPRNAAAGSLRQLNPEISASRPLAIYCYSIGACEDYKLPNSHLEQLNLLKEFGFRVSPETRRAIGVEGCLDYYQYMLAKRNQLPFEIDGVVYKIDSISLQQQLGYVSRAPRFACAHKFPATEEMTRLIAVDFQVGRTGAVTPVARLEPVSVGGVTVSNATLHNFDEITRKDIRIGDTVIIRRAGDVIPEVVSVILEKRPINARKIELPKNCPVCGSEVVREADEAIARCIGGLYCKAQLKRMMWHFASRKAMYIEGLGSVLIDQLVDEGIVHHLADLYELDLQTLANLPRMGEKSAKNLLSALEKSKKTTFNRFLYALGIREIGEAGARVLAEHYCDVESLKSATIEELMTLNDIGPVAASHVVHFFAQAHNLEVIDRLLELGIHWPKPEKIQVNQQNPFFGKTVVLTGTLSAMGREEAKAKLLALGAKVSGSVSSKTDYVIAGSEAGSKLIKATELGVAIIEEDEFLKWVNS.

NAD(+)-binding positions include 34 to 38, 83 to 84, and Glu116; these read DAEYD and SL. Catalysis depends on Lys118, which acts as the N6-AMP-lysine intermediate. Residues Arg139, Glu176, Lys293, and Lys317 each coordinate NAD(+). Zn(2+) contacts are provided by Cys411, Cys414, Cys429, and Cys435. One can recognise a BRCT domain in the interval 595-673; sequence NQQNPFFGKT…EDEFLKWVNS (79 aa).

It belongs to the NAD-dependent DNA ligase family. LigA subfamily. Mg(2+) serves as cofactor. The cofactor is Mn(2+).

It carries out the reaction NAD(+) + (deoxyribonucleotide)n-3'-hydroxyl + 5'-phospho-(deoxyribonucleotide)m = (deoxyribonucleotide)n+m + AMP + beta-nicotinamide D-nucleotide.. Functionally, DNA ligase that catalyzes the formation of phosphodiester linkages between 5'-phosphoryl and 3'-hydroxyl groups in double-stranded DNA using NAD as a coenzyme and as the energy source for the reaction. It is essential for DNA replication and repair of damaged DNA. The protein is DNA ligase of Legionella pneumophila (strain Paris).